A 137-amino-acid chain; its full sequence is Small ribosomal subunit protein uS12 (137 aa).

Disordered regions lie at residues 1 to 21 and 36 to 57; these read MPTINQLVRKPRKSKVEKSDS and TKLSAPQKRGVATRVGTMTPKK. Residue D102 is modified to 3-methylthioaspartic acid.

It belongs to the universal ribosomal protein uS12 family. Part of the 30S ribosomal subunit. Contacts proteins S8 and S17. May interact with IF1 in the 30S initiation complex.

With S4 and S5 plays an important role in translational accuracy. Its function is as follows. Interacts with and stabilizes bases of the 16S rRNA that are involved in tRNA selection in the A site and with the mRNA backbone. Located at the interface of the 30S and 50S subunits, it traverses the body of the 30S subunit contacting proteins on the other side and probably holding the rRNA structure together. The combined cluster of proteins S8, S12 and S17 appears to hold together the shoulder and platform of the 30S subunit. The sequence is that of Small ribosomal subunit protein uS12 from Streptococcus agalactiae serotype Ia (strain ATCC 27591 / A909 / CDC SS700).